We begin with the raw amino-acid sequence, 1580 residues long: Dynamin-binding protein (1580 aa).

Methionine 1 carries the N-acetylmethionine modification. SH3 domains are found at residues 2–61, 66–127, and 146–205; these read EPGS…IVTI, EGER…ELCL, and YSLG…LLGP. Disordered regions lie at residues 211 to 245, 304 to 446, 500 to 546, and 589 to 688; these read ESVN…DQQS, NRTE…LVPL, YAQK…DSLD, and RGSS…AQTF. Acidic residues predominate over residues 229–243; sequence VPPEEAESGGDEDDQ. Residues 244–303 enclose the SH3 4 domain; it reads QSGTYGIALYRFQALETNELDFEVGDRIQILGTLEDGWLEGCLKGKTGVFPHRFVKLCPS. 2 stretches are compositionally biased toward polar residues: residues 422–439 and 502–513; these read QKSQ…TSDP and QKHQTSTENTAS. A compositionally biased stretch (basic and acidic residues) spans 516–527; it reads DPPERPERRPGL. Positions 608–617 are enriched in pro residues; sequence RPPPPRPRTP. Residues 671–682 are compositionally biased toward basic and acidic residues; sequence APEKEDSEHMEK. Serine 683 carries the post-translational modification Phosphoserine. The stretch at 694–755 forms a coiled coil; the sequence is LARIRDVEQD…LELQQLRDMT (62 aa). Residues 783–970 form the DH domain; that stretch reads KRAKVVAELL…KEINVNINEY (188 aa). Positions 1011–1220 constitute a BAR domain; that stretch reads LKHLTGFAPQ…LKATDREGNL (210 aa). Residues 1288-1351 form the SH3 5 domain; the sequence is PPEKLFHVQR…YSSFLKPYNP (64 aa). The span at 1356–1365 shows a compositional bias: low complexity; sequence SDASVASHSS. 2 disordered regions span residues 1356–1384 and 1426–1514; these read SDAS…NSHS and TGHP…GSSE. Over residues 1426 to 1440 the composition is skewed to polar residues; that stretch reads TGHPETGPSTCSSDP. An SH3 6 domain is found at 1516 to 1579; the sequence is EGNQVYFAIY…PSNYIRKTEY (64 aa).

Binds DNM1 via its N-terminal SH3 domains. The C-terminal SH3 domain binds a complex containing actin, tubulin, Hsp70 and actin-regulatory proteins, such as ENAH, EVL, WIRE, CR16, WAVE1 and NAP1L1. Interacts with FASLG. Interacts (via SH3 domain 6) with WASL. Interacts (via SH3 domain 6) interacts with ENAH. Interacts (via C-terminal domain) with TJP1; required for the apical cell-cell junction localization of DNMBP.

Its subcellular location is the cytoplasm. It localises to the golgi apparatus. The protein resides in the golgi stack. The protein localises to the cytoskeleton. It is found in the synapse. Its subcellular location is the cell junction. Functionally, plays a critical role as a guanine nucleotide exchange factor (GEF) for CDC42 in several intracellular processes associated with the actin and microtubule cytoskeleton. Regulates the structure of apical junctions in epithelial cells. Participates in the normal lumenogenesis of epithelial cell cysts by regulating spindle orientation. Plays a role in ciliogenesis. May play a role in membrane trafficking between the cell surface and the Golgi. In Mus musculus (Mouse), this protein is Dynamin-binding protein.